The following is a 101-amino-acid chain: Apolipoprotein C-II (101 aa).

An N-terminal signal peptide occupies residues 1–22; the sequence is MGIRYLLVLVLVLLVLGCEVQG. The tract at residues 66-74 is lipid binding; it reads TVDEKIREI. Positions 78–101 are lipoprotein lipase cofactor; it reads STAAVSTYAGIFTDQLLSMLKGDQ.

Belongs to the apolipoprotein C2 family. Proapolipoprotein C-II is synthesized as a sialic acid containing glycoprotein which is subsequently desialylated prior to its proteolytic processing. Post-translationally, proapolipoprotein C-II, the major form found in plasma undergoes proteolytic cleavage of its N-terminal hexapeptide to generate apolipoprotein C-II, which occurs as the minor form in plasma.

It is found in the secreted. Component of chylomicrons, very low-density lipoproteins (VLDL), low-density lipoproteins (LDL), and high-density lipoproteins (HDL) in plasma. Plays an important role in lipoprotein metabolism as an activator of lipoprotein lipase. Both proapolipoprotein C-II and apolipoprotein C-II can activate lipoprotein lipase. The polypeptide is Apolipoprotein C-II (APOC2) (Mirounga angustirostris (Northern elephant seal)).